Consider the following 620-residue polypeptide: Long-chain fatty acid transport protein 2 (620 aa).

At 1 to 4 (MLSA) the chain is on the lumenal side. The chain crosses the membrane as a helical span at residues 5-27 (IYTVLAGLLFLPLLVNLCCPYFF). Topologically, residues 28–106 (QDIGYFLKVA…DHLGLRQGDC (79 aa)) are cytoplasmic. A helical transmembrane segment spans residues 107-127 (VALLMGNEPAYVWLWLGLVKL). Topologically, residues 128–261 (GCAMACLNYN…SGLKADDVIY (134 aa)) are lumenal. 222-233 (YIYTSGTTGLPK) serves as a coordination point for AMP. The chain crosses the membrane as a helical span at residues 262–282 (ITLPFYHSAALLIGIHGCIVA). The Cytoplasmic segment spans residues 283–620 (GATLALRTKF…NAISAKTLKL (338 aa)). Lysine 291 carries the post-translational modification N6-acetyllysine. At threonine 577 the chain carries Phosphothreonine.

It belongs to the ATP-dependent AMP-binding enzyme family. As to expression, expressed in liver, kidney, placenta, intestine, brain, heart, and colon. Predominantly expressed in liver. Expressed in liver, placenta, and intestine, but much lower relative to isoform 1.

Its subcellular location is the endoplasmic reticulum membrane. The protein resides in the peroxisome membrane. It localises to the cell membrane. The protein localises to the microsome. It carries out the reaction a fatty acid(in) = a fatty acid(out). The catalysed reaction is (9Z)-octadecenoate(out) = (9Z)-octadecenoate(in). The enzyme catalyses a long-chain fatty acid + ATP + CoA = a long-chain fatty acyl-CoA + AMP + diphosphate. It catalyses the reaction (5Z,8Z,11Z,14Z)-eicosatetraenoate + ATP + CoA = (5Z,8Z,11Z,14Z)-eicosatetraenoyl-CoA + AMP + diphosphate. It carries out the reaction hexadecanoate + ATP + CoA = hexadecanoyl-CoA + AMP + diphosphate. The catalysed reaction is (9Z)-octadecenoate + ATP + CoA = (9Z)-octadecenoyl-CoA + AMP + diphosphate. The enzyme catalyses 3,7,11,15-tetramethylhexadecanoate + ATP + CoA = phytanoyl-CoA + AMP + diphosphate. It catalyses the reaction (9Z,12Z,15Z)-octadecatrienoate + ATP + CoA = (9Z,12Z,15Z)-octadecatrienoyl-CoA + AMP + diphosphate. It carries out the reaction 2,6,10,14-tetramethylpentadecanoate + ATP + CoA = pristanoyl-CoA + AMP + diphosphate. The catalysed reaction is (E)-hexadec-2-enoate + ATP + CoA = (2E)-hexadecenoyl-CoA + AMP + diphosphate. The enzyme catalyses a very long-chain fatty acid + ATP + CoA = a very long-chain fatty acyl-CoA + AMP + diphosphate. It catalyses the reaction tetracosanoate + ATP + CoA = tetracosanoyl-CoA + AMP + diphosphate. It carries out the reaction (4Z,7Z,10Z,13Z,16Z,19Z)-docosahexaenoate + ATP + CoA = (4Z,7Z,10Z,13Z,16Z,19Z)-docosahexaenoyl-CoA + AMP + diphosphate. The catalysed reaction is (25R)-3alpha,7alpha,12alpha-trihydroxy-5beta-cholestan-26-oate + ATP + CoA = (25R)-3alpha,7alpha,12alpha-trihydroxy-5beta-cholestan-26-oyl-CoA + AMP + diphosphate. Mediates the import of long-chain fatty acids (LCFA) into the cell by facilitating their transport across cell membranes, playing an important role in hepatic fatty acid uptake. Also functions as an acyl-CoA ligase catalyzing the ATP-dependent formation of fatty acyl-CoA using LCFA and very-long-chain fatty acids (VLCFA) as substrates, which prevents fatty acid efflux from cells and might drive more fatty acid uptake. Plays a pivotal role in regulating available LCFA substrates from exogenous sources in tissues undergoing high levels of beta-oxidation or triglyceride synthesis. Can also activate branched-chain fatty acids such as phytanic acid and pristanic acid. May contribute to the synthesis of sphingosine-1-phosphate. Does not activate C24 bile acids, cholate and chenodeoxycholate. In vitro, activates 3-alpha,7-alpha,12-alpha-trihydroxy-5-beta-cholestanate (THCA), the C27 precursor of cholic acid deriving from the de novo synthesis from cholesterol. However, it is not critical for THCA activation and bile synthesis in vivo. Functionally, exhibits both long-chain fatty acids (LCFA) transport activity and acyl CoA synthetase towards very long-chain fatty acids. Shows a preference for generating CoA derivatives of n-3 fatty acids, which are preferentially trafficked into phosphatidylinositol. Its function is as follows. Exhibits long-chain fatty acids (LCFA) transport activity but lacks acyl CoA synthetase towards very long-chain fatty acids. The chain is Long-chain fatty acid transport protein 2 (SLC27A2) from Homo sapiens (Human).